The chain runs to 1305 residues: Contactin-associated protein like 5-3 (1305 aa).

The N-terminal stretch at 1–24 (MDSVPRLNSVFTLVLSGLWHFGLT) is a signal peptide. In terms of domain architecture, F5/8 type C spans 25-174 (ATNYNCDDPL…IGMRVEVYGC (150 aa)). Residues 25–1235 (ATNYNCDDPL…EPLTNAVPSD (1211 aa)) lie on the Extracellular side of the membrane. 2 Laminin G-like domains span residues 180-360 (VADF…TFSC) and 367-544 (PITF…IDLC). Asn282 is a glycosylation site (N-linked (GlcNAc...) asparagine). Cysteines 329 and 360 form a disulfide. N-linked (GlcNAc...) asparagine glycosylation is present at Asn496. Disulfide bonds link Cys512-Cys544, Cys550-Cys561, and Cys555-Cys570. An EGF-like 1 domain is found at 546–583 (IKDRCLPNYCEHGGQCAQTWTNFYCNCSDTGYTGATCH). N-linked (GlcNAc...) asparagine glycosylation is present at Asn571. The cysteines at positions 572 and 582 are disulfide-linked. The Fibrinogen C-terminal domain occupies 584–790 (DSIYEQSCEV…LRCYGDRHFW (207 aa)). Residues 791–956 (NAVSFSTEAS…KVTSGVRPGC (166 aa)) enclose the Laminin G-like 3 domain. 4 cysteine pairs are disulfide-bonded: Cys929–Cys956, Cys960–Cys973, Cys967–Cys982, and Cys984–Cys994. The region spanning 957 to 995 (PGHCSSYGRNCQNGGKCVEKHIGYSCDCTNSPYEGPFCQ) is the EGF-like 2 domain. Residues 1013–1198 (QEPYSVTKNT…VQRTLTESSC (186 aa)) enclose the Laminin G-like 4 domain. N-linked (GlcNAc...) asparagine glycans are attached at residues Asn1023 and Asn1057. Residues Cys1163 and Cys1198 are joined by a disulfide bond. A helical transmembrane segment spans residues 1236–1256 (LAVIGGIIAVVTFISFSVIGI). Residues 1257–1305 (MTHFFYQHKRSHYASQMKEKEYPENVDSSSRNDIDLQNTTRECKQEDFI) are Cytoplasmic-facing.

The protein belongs to the neurexin family. In terms of tissue distribution, expressed in brain.

It is found in the membrane. In terms of biological role, may play a role in the correct development and proper functioning of the peripheral and central nervous system and be involved in cell adhesion and intercellular communication. This Mus musculus (Mouse) protein is Contactin-associated protein like 5-3 (Cntnap5c).